The chain runs to 345 residues: MFSSLYPLARASLFKMDAEDAHHLTLRMLGAAGRTGLACALSPRVPDAPRTVMGLSFRNPVGLAAGLDKDGAAIDGFAALGFGFIEVGTVTPRAQPGNPRPRMFRLPEADAIINRMGFNNSGVDQFVKNVQAARYRGVLGLNIGKNADTPIERAADDYLYCLERVYPFASYVTINISSPNTKNLRQLQGAGELDALLAALKDKQRRLADLHGKLVPLALKIAPDLDDEQVKEIAATLLRHDIEGVIATNTTLSREAVKGLPHADEAGGLSGRPVFDASNAVIRKLRAELGDAVPIIGVGGIFSGEDARAKLAAGAALVQLYTGFIYRGPALVAECVKAIARGEAR.

FMN contacts are provided by residues 65–69 (AGLDK) and Thr89. Lys69 serves as a coordination point for substrate. Substrate is bound at residue 114–118 (NRMGF). FMN-binding residues include Asn142 and Asn175. Asn175 lines the substrate pocket. Residue Ser178 is the Nucleophile of the active site. Asn180 serves as a coordination point for substrate. Residues Lys220 and Thr248 each coordinate FMN. 249–250 (NT) is a binding site for substrate. FMN contacts are provided by residues Gly271, Gly300, and 321-322 (YT).

This sequence belongs to the dihydroorotate dehydrogenase family. Type 2 subfamily. Monomer. The cofactor is FMN.

Its subcellular location is the cell membrane. The enzyme catalyses (S)-dihydroorotate + a quinone = orotate + a quinol. Its pathway is pyrimidine metabolism; UMP biosynthesis via de novo pathway; orotate from (S)-dihydroorotate (quinone route): step 1/1. Catalyzes the conversion of dihydroorotate to orotate with quinone as electron acceptor. In Burkholderia mallei (strain NCTC 10247), this protein is Dihydroorotate dehydrogenase (quinone).